The sequence spans 352 residues: DNA primase (352 aa).

Disordered stretches follow at residues 145–172 (DPKL…REDG) and 318–352 (YRQQ…GMSL). Residues 318–332 (YRQQWEKLEGREPVR) show a composition bias toward basic and acidic residues.

Functionally, functions as a primase with respect to replication at the (vegetative) origin of replication of pTF-FC2. In Acidithiobacillus ferrooxidans (Thiobacillus ferrooxidans), this protein is DNA primase (repB).